The sequence spans 262 residues: Steroid 5-alpha-reductase DET2 (262 aa).

A run of 6 helical transmembrane segments spans residues 13-33 (CLLT…FLQA), 51-71 (IAWF…FPFG), 79-99 (SLLL…IYPL), 113-133 (FPIT…YIQA), 148-168 (WFWW…YINI), and 205-225 (AIEW…GFFL).

The protein belongs to the steroid 5-alpha reductase family.

It localises to the membrane. The enzyme catalyses a 3-oxo-5alpha-steroid + NADP(+) = a 3-oxo-Delta(4)-steroid + NADPH + H(+). The catalysed reaction is 5alpha-campestan-3-one + NADP(+) = campest-4-en-3-one + NADPH + H(+). It catalyses the reaction (22S,24R)-22-hydroxy-5alpha-ergostan-3-one + NADP(+) = (22S)-22-hydroxycampest-4-en-3-one + NADPH + H(+). It carries out the reaction 3-dehydro-6-deoxoteasterone + NADP(+) = (22R,23R)-22,23-dihydroxycampest-4-en-3-one + NADPH + H(+). Its pathway is plant hormone biosynthesis; brassinosteroid biosynthesis. Its activity is regulated as follows. Inhibited by the 4-azasteroids 4-MA. Involved in a reduction step in the biosynthesis of the plant steroid, brassinolide (BL); acts at the second step in brassinolide biosynthesis in the 5alpha-reduction of (24R)- 24-methylcholest-4-en-3-one, which is further modified to form campestanol. Can use progesterone, testosterone, androstenedione and campestenone as substrate. Also catalyzes the conversion of campest-4-en-3-one (campesta-4-en-3-one, 4-en-3-one) to campest-3-one (campesta-3-one, 3-one), of (22S,24R)-22-hydroxyergost-4-en-3-one (22-hydroxy-campesta-4-en-3-one, 22-OH-4-en-3-one) to (22S,24R)-22-hydroxy-5alpha-ergostan-3-one (22-hydroxy-campesta-3-one, 22-OH-3-one), and of (22R,23R)-22,23-dihydroxy-5alpha-campestan-3-one (22,23,diOH-4-en-3-one) to (22R,23R)-22,23-dihydroxycampest-4-en-3-one (6-deoxo3DT). Required for the brassinosteroid- (BR) dependent regulation of seed size and shape as well as embryo development. This is Steroid 5-alpha-reductase DET2 from Arabidopsis thaliana (Mouse-ear cress).